The sequence spans 354 residues: Protein sex-lethal (354 aa).

The disordered stretch occupies residues 1–20 (MYGNNNPGSNNNNGGYPPYG). 2 RRM domains span residues 127–205 (TNLI…YARP) and 213–293 (TNLY…LAQE).

In terms of assembly, part of a complex containing fl(2)d, Sxl and vir. Interacts with nito. Interacts with Unr; cooperates with Sxl to prevent translation of msl-2 transcripts. Interacts with how; promoting nuclear retention of msl-2 transcripts. In terms of tissue distribution, the embryo-specific isoform is not expressed in the pole cells, which are the progenitors of the germline.

The protein resides in the nucleus. It is found in the cytoplasm. Sex determination switch protein, which controls sexual development and dosage compensation in females. Sxl protein is only active in females: it is inactive in males throughout development. Acts as a mRNA-binding protein, which specifically binds to a subset of pre-mRNAs and mRNAs and regulates their processing and/or translation. Promotes sexual development by controlling the female-specific alternative splicing of the transformer (tra) pre-mRNA: binds tightly to a characteristic uridine-rich polypyrimidine tract at the non-sex specific 3' splice site in one of the tra introns, preventing the general splicing factor U2AF from binding to this site and forcing it to bind to the female-specific 3' splice site. Acts as an inhibitor of dosage compensation in females by preventing production of msl-2 protein, an essential component of the MSL complex, the complex that mediates X-chromosome dosage compensation. Specifially binds to uridine stretches in both the 5'- and 3'-UTR of msl-2 transcripts. Sxl first acts at the splicing level by promoting retention of an intron in the 5' UTR of msl-2 pre-mRNA. The retained intron contains Sxl-binding sites that are required for subsequent steps of repression: after msl-2 mRNA export into the cytoplasm, Sxl coordinates its translational repression by targeting early steps of translation initiation. Together with how, Sxl also prevents production of msl-2 protein by preventing nuclear export of msl-2 transcripts. The chain is Protein sex-lethal from Drosophila subobscura (Fruit fly).